We begin with the raw amino-acid sequence, 371 residues long: Queuine tRNA-ribosyltransferase (371 aa).

The Proton acceptor role is filled by Asp90. Substrate-binding positions include 90-94, Asp144, Gln188, and Gly215; that span reads DSGGF. Residues 246-252 form an RNA binding region; sequence GVGTPED. The active-site Nucleophile is Asp265. An RNA binding; important for wobble base 34 recognition region spans residues 270 to 274; that stretch reads TRNAR. Zn(2+) is bound by residues Cys303, Cys305, Cys308, and His334.

It belongs to the queuine tRNA-ribosyltransferase family. Homodimer. Within each dimer, one monomer is responsible for RNA recognition and catalysis, while the other monomer binds to the replacement base PreQ1. Zn(2+) serves as cofactor.

The enzyme catalyses 7-aminomethyl-7-carbaguanine + guanosine(34) in tRNA = 7-aminomethyl-7-carbaguanosine(34) in tRNA + guanine. The protein operates within tRNA modification; tRNA-queuosine biosynthesis. In terms of biological role, catalyzes the base-exchange of a guanine (G) residue with the queuine precursor 7-aminomethyl-7-deazaguanine (PreQ1) at position 34 (anticodon wobble position) in tRNAs with GU(N) anticodons (tRNA-Asp, -Asn, -His and -Tyr). Catalysis occurs through a double-displacement mechanism. The nucleophile active site attacks the C1' of nucleotide 34 to detach the guanine base from the RNA, forming a covalent enzyme-RNA intermediate. The proton acceptor active site deprotonates the incoming PreQ1, allowing a nucleophilic attack on the C1' of the ribose to form the product. After dissociation, two additional enzymatic reactions on the tRNA convert PreQ1 to queuine (Q), resulting in the hypermodified nucleoside queuosine (7-(((4,5-cis-dihydroxy-2-cyclopenten-1-yl)amino)methyl)-7-deazaguanosine). In Neisseria meningitidis serogroup C (strain 053442), this protein is Queuine tRNA-ribosyltransferase.